The primary structure comprises 313 residues: Aspartate carbamoyltransferase catalytic subunit (313 aa).

Residues Arg54 and Thr55 each contribute to the carbamoyl phosphate site. Lys82 lines the L-aspartate pocket. The carbamoyl phosphate site is built by Arg104, His132, and Gln135. Residues Arg165 and Arg219 each contribute to the L-aspartate site. The carbamoyl phosphate site is built by Gly260 and Pro261.

Belongs to the aspartate/ornithine carbamoyltransferase superfamily. ATCase family. In terms of assembly, heterododecamer (2C3:3R2) of six catalytic PyrB chains organized as two trimers (C3), and six regulatory PyrI chains organized as three dimers (R2).

It carries out the reaction carbamoyl phosphate + L-aspartate = N-carbamoyl-L-aspartate + phosphate + H(+). It participates in pyrimidine metabolism; UMP biosynthesis via de novo pathway; (S)-dihydroorotate from bicarbonate: step 2/3. In terms of biological role, catalyzes the condensation of carbamoyl phosphate and aspartate to form carbamoyl aspartate and inorganic phosphate, the committed step in the de novo pyrimidine nucleotide biosynthesis pathway. This Thermobifida fusca (strain YX) protein is Aspartate carbamoyltransferase catalytic subunit.